The sequence spans 1451 residues: Fanconi anemia group D2 protein (1451 aa).

The tract at residues 1-37 (MVSKRRLSKSEDKESLTEDASKTRKQPLSKKTKKSHI) is disordered. Residues 1–291 (MVSKRRLSKS…IKFILHSVTA (291 aa)) form an interaction with FANCE region. Ser-8 carries the phosphoserine modification. Over residues 8-22 (SKSEDKESLTEDASK) the composition is skewed to basic and acidic residues. Over residues 23 to 36 (TRKQPLSKKTKKSH) the composition is skewed to basic residues. Position 222 is a phosphoserine; by ATM (Ser-222). The segment at 248–359 (VLSSLRLDPN…IKSAIRYEKT (112 aa)) is interaction with BRCA2. Lys-561 is covalently cross-linked (Glycyl lysine isopeptide (Lys-Gly) (interchain with G-Cter in ubiquitin)). A phosphoserine mark is found at Ser-592, Ser-594, and Ser-717. The interval 868–906 (IERKQKTDGSKTSSSDTLSEEKNSECDPTPSHRGQLNKE) is disordered. At Ser-1257 the chain carries Phosphoserine. Positions 1396–1451 (GEEIKSQNSQESTADESEDDMSSQASKSKATEDGEEDEVSAGEKEQDSDESYDDSD) are disordered. A phosphoserine; by ATM mark is found at Ser-1401 and Ser-1404. 2 positions are modified to phosphoserine: Ser-1412 and Ser-1423. Position 1426 is a phosphothreonine (Thr-1426). Residues 1428 to 1451 (DGEEDEVSAGEKEQDSDESYDDSD) show a composition bias toward acidic residues. At Ser-1435 the chain carries Phosphoserine.

Belongs to the Fanconi anemia protein FANCD2 family. As to quaternary structure, homodimer; cannot be ubiquitinated and does not bind DNA. Part of a FANCI-FANCD2 heterodimeric complex that binds and scans dsDNA for DNA damage. Interacts directly with FANCE and FANCI. Interacts with USP1 and MEN1. The ubiquitinated form specifically interacts with BRCA1 and BLM. Both the nonubiquitinated and the monoubiquitinated forms interact with BRCA2; this interaction is mediated by phosphorylated FANCG and the complex also includes XCCR3. The ubiquitinated form specifically interacts with MTMR15/FAN1 (via UBZ-type zinc finger), leading to recruit MTMR15/FAN1 to sites of DNA damage. Interacts with DCLRE1B/Apollo. Interacts with POLN. Interacts with UHRF1 and UHRF2; these interactions promote FANCD2 activation. In terms of processing, monoubiquitinated on Lys-561 during S phase and upon genotoxic stress by FANCL in complex with E2 ligases UBE2T or UBE2W (isoform 1 and isoform 2). Deubiquitinated by USP1 as cells enter G2/M, or once DNA repair is completed. Monoubiquitination requires the joint intervention of the FANC core complex, including FANCA, FANCB, FANCC, FANCE, FANCF, FANCG, and FANCM, and proteins involved in cell cycle checkpoints and DNA repair, including RPA1, ATR, CHEK1 and BRCA1, and is mediated by FANCL/PHF9. Monoubiquitination prevents DNA release from the FANCI-FANCD2 complex. FANCD2 is only ubiquitinated in the FANCI-FANCD2 complex and the monoubiquitination of FANCD2 is promoted by phosphorylation of FANCI. Ubiquitination is required for binding to chromatin, interaction with BRCA1, BRCA2 and MTMR15/FAN1, DNA repair, and normal cell cycle progression, but not for phosphorylation on Ser-222 or interaction with MEN1. Phosphorylated in response to various genotoxic stresses by ATM and/or ATR. Upon ionizing radiation, phosphorylated by ATM on Ser-222 and Ser-1404. Phosphorylation on Ser-222 is required for S-phase checkpoint activation, but not for ubiquitination, foci formation, or DNA repair. In contrast, phosphorylation by ATR on other sites may be required for ubiquitination and foci formation. As to expression, highly expressed in germinal center cells of the spleen, tonsil, and reactive lymph nodes, and in the proliferating basal layer of squamous epithelium of tonsil, esophagus, oropharynx, larynx and cervix. Expressed in cytotrophoblastic cells of the placenta and exocrine cells of the pancreas (at protein level). Highly expressed in testis, where expression is restricted to maturing spermatocytes.

The protein localises to the nucleus. Required for maintenance of chromosomal stability. Promotes accurate and efficient pairing of homologs during meiosis. Involved in the repair of DNA double-strand breaks, both by homologous recombination and single-strand annealing. The FANCI-FANCD2 complex binds and scans double-stranded DNA (dsDNA) for DNA damage; this complex stalls at DNA junctions between double-stranded DNA and single-stranded DNA. May participate in S phase and G2 phase checkpoint activation upon DNA damage. Plays a role in preventing breakage and loss of missegregating chromatin at the end of cell division, particularly after replication stress. Required for the targeting, or stabilization, of BLM to non-centromeric abnormal structures induced by replicative stress. Promotes BRCA2/FANCD1 loading onto damaged chromatin. May also be involved in B-cell immunoglobulin isotype switching. The polypeptide is Fanconi anemia group D2 protein (FANCD2) (Homo sapiens (Human)).